Reading from the N-terminus, the 276-residue chain is Formamidopyrimidine-DNA glycosylase (276 aa).

Proline 2 functions as the Schiff-base intermediate with DNA in the catalytic mechanism. The active-site Proton donor is the glutamate 3. The active-site Proton donor; for beta-elimination activity is the lysine 58. Residues histidine 94, arginine 112, and arginine 157 each coordinate DNA. An FPG-type zinc finger spans residues 242-276; it reads FVYDRAGLPCRVCGTPIKQIVQGQRSTYFCPTCQR. Catalysis depends on arginine 266, which acts as the Proton donor; for delta-elimination activity.

Belongs to the FPG family. Monomer. It depends on Zn(2+) as a cofactor.

It carries out the reaction Hydrolysis of DNA containing ring-opened 7-methylguanine residues, releasing 2,6-diamino-4-hydroxy-5-(N-methyl)formamidopyrimidine.. It catalyses the reaction 2'-deoxyribonucleotide-(2'-deoxyribose 5'-phosphate)-2'-deoxyribonucleotide-DNA = a 3'-end 2'-deoxyribonucleotide-(2,3-dehydro-2,3-deoxyribose 5'-phosphate)-DNA + a 5'-end 5'-phospho-2'-deoxyribonucleoside-DNA + H(+). Its function is as follows. Involved in base excision repair of DNA damaged by oxidation or by mutagenic agents. Acts as a DNA glycosylase that recognizes and removes damaged bases. Has a preference for oxidized purines, such as 7,8-dihydro-8-oxoguanine (8-oxoG). Has AP (apurinic/apyrimidinic) lyase activity and introduces nicks in the DNA strand. Cleaves the DNA backbone by beta-delta elimination to generate a single-strand break at the site of the removed base with both 3'- and 5'-phosphates. The protein is Formamidopyrimidine-DNA glycosylase of Paraburkholderia xenovorans (strain LB400).